The following is a 513-amino-acid chain: Na(+)/H(+) antiporter NhaB (513 aa).

Helical transmembrane passes span 23–43 (LALIIFLIVNPLIFLISPFVA), 52–72 (IFTLAMALKCYPLLPGGLLAI), 97–117 (LLLMFMVAGIYFMKQLLLFIF), 120–140 (LLLSIRSKMLLSLSFCVAAAF), 144–164 (FLDALTVVAVVISVAVGFYGI), 202–222 (LMMHAGVGTALGGVMTMVGEP), 238–258 (FFLRMSPVTVPVLICGLLTCL), 303–323 (AIIGVWLVTALALHLAEVGLI), 348–368 (TESLPFTALLTVFFSVVAVII), 391–411 (LFYIFNGLLSSISDNVFVGTI), 447–467 (ATPNGQAAFLFLLTSALAPLI), and 475–495 (VWMALPYTLVLTLVGLLCVEF).

This sequence belongs to the NhaB Na(+)/H(+) (TC 2.A.34) antiporter family.

It is found in the cell inner membrane. It carries out the reaction 2 Na(+)(in) + 3 H(+)(out) = 2 Na(+)(out) + 3 H(+)(in). Functionally, na(+)/H(+) antiporter that extrudes sodium in exchange for external protons. In Shigella boydii serotype 18 (strain CDC 3083-94 / BS512), this protein is Na(+)/H(+) antiporter NhaB.